Consider the following 428-residue polypeptide: Tol-Pal system protein TolB (428 aa).

A signal peptide spans 1-24; sequence MPSLKTLLRGVLVAAMLVAGSARA.

This sequence belongs to the TolB family. In terms of assembly, the Tol-Pal system is composed of five core proteins: the inner membrane proteins TolA, TolQ and TolR, the periplasmic protein TolB and the outer membrane protein Pal. They form a network linking the inner and outer membranes and the peptidoglycan layer.

It is found in the periplasm. Functionally, part of the Tol-Pal system, which plays a role in outer membrane invagination during cell division and is important for maintaining outer membrane integrity. The sequence is that of Tol-Pal system protein TolB from Chromobacterium violaceum (strain ATCC 12472 / DSM 30191 / JCM 1249 / CCUG 213 / NBRC 12614 / NCIMB 9131 / NCTC 9757 / MK).